The chain runs to 151 residues: MADRYVLIEVNEDGEGRLKDEAVTWIDFRLSIVDFNASEGLNQLMEQISKDVKDELVLVLFNYRVKSSYDSWSGATEYEDFFDVEFFKVIKKNYKKFYQGLVTVELDVGINGFDNIESMPTDSNQNYYRNLIAEWEEFYNEDFIPLSLNKR.

This is an uncharacterized protein from Bacillus subtilis (strain 168).